We begin with the raw amino-acid sequence, 87 residues long: UPF0250 protein Spro_1197 (87 aa).

It belongs to the UPF0250 family.

This chain is UPF0250 protein Spro_1197, found in Serratia proteamaculans (strain 568).